Consider the following 288-residue polypeptide: Bifunctional protein FolD (288 aa).

NADP(+) contacts are provided by residues 171–173, serine 196, and threonine 237; that span reads GRS.

The protein belongs to the tetrahydrofolate dehydrogenase/cyclohydrolase family. Homodimer.

The enzyme catalyses (6R)-5,10-methylene-5,6,7,8-tetrahydrofolate + NADP(+) = (6R)-5,10-methenyltetrahydrofolate + NADPH. It catalyses the reaction (6R)-5,10-methenyltetrahydrofolate + H2O = (6R)-10-formyltetrahydrofolate + H(+). It functions in the pathway one-carbon metabolism; tetrahydrofolate interconversion. Functionally, catalyzes the oxidation of 5,10-methylenetetrahydrofolate to 5,10-methenyltetrahydrofolate and then the hydrolysis of 5,10-methenyltetrahydrofolate to 10-formyltetrahydrofolate. The chain is Bifunctional protein FolD from Elusimicrobium minutum (strain Pei191).